The primary structure comprises 144 residues: Large ribosomal subunit protein uL11 (144 aa).

This sequence belongs to the universal ribosomal protein uL11 family. Part of the ribosomal stalk of the 50S ribosomal subunit. Interacts with L10 and the large rRNA to form the base of the stalk. L10 forms an elongated spine to which L12 dimers bind in a sequential fashion forming a multimeric L10(L12)X complex. Post-translationally, one or more lysine residues are methylated.

Functionally, forms part of the ribosomal stalk which helps the ribosome interact with GTP-bound translation factors. The chain is Large ribosomal subunit protein uL11 from Saccharopolyspora erythraea (strain ATCC 11635 / DSM 40517 / JCM 4748 / NBRC 13426 / NCIMB 8594 / NRRL 2338).